Here is a 403-residue protein sequence, read N- to C-terminus: MPLKFRIKHTLDRMRVGKVKTRHGSFETPVFIPVATLAAIRGLDNRDLKDMGVEVILANTYHLHLRPGDELIKELGGLHKFMNFDGVIVTDSGGFQAFSLGFGMEHGVGKIANNIFLEELREERLREAENERKKLAVVTDRGVRFKDPKSGRIVELTPKKSMEIQSNLGSDIIFAFDECTSPLSDRDYTEKALERTHRWAEECLQHYDRRQALFGVVQGGEYRDLREKSARFMAERDFAGYGIGGSLGKSKQDMLNILDWVIPLLPEEKPRHLLGIGAIEDLFNCTEKGVDMYDCVAPARWARRGHLYVSPAEGGNVRNKFRIHIKNAAFRIDNRPVDRTCDCLVCQNYSRAYLRHLYKANELLYFRLATYHNIYFVVKLMERIRESIADGSFYELKREWLGF.

Asp-91 functions as the Proton acceptor in the catalytic mechanism. Substrate-binding positions include Asp-91–Phe-95, Asp-177, Gln-218, and Gly-245. Positions Gly-275–Asp-281 are RNA binding. Asp-294 serves as the catalytic Nucleophile. Residues Ala-299–Arg-303 form an RNA binding; important for wobble base 34 recognition region. Residues Cys-341, Cys-343, Cys-346, and His-372 each contribute to the Zn(2+) site.

Belongs to the queuine tRNA-ribosyltransferase family. As to quaternary structure, homodimer. Within each dimer, one monomer is responsible for RNA recognition and catalysis, while the other monomer binds to the replacement base PreQ1. Requires Zn(2+) as cofactor.

The catalysed reaction is 7-aminomethyl-7-carbaguanine + guanosine(34) in tRNA = 7-aminomethyl-7-carbaguanosine(34) in tRNA + guanine. Functionally, catalyzes the base-exchange of a guanine (G) residue with the queuine precursor 7-aminomethyl-7-deazaguanine (PreQ1) at position 34 (anticodon wobble position) in tRNAs with GU(N) anticodons (tRNA-Asp, -Asn, -His and -Tyr). Catalysis occurs through a double-displacement mechanism. The nucleophile active site attacks the C1' of nucleotide 34 to detach the guanine base from the RNA, forming a covalent enzyme-RNA intermediate. The proton acceptor active site deprotonates the incoming PreQ1, allowing a nucleophilic attack on the C1' of the ribose to form the product. After dissociation, two additional enzymatic reactions on the tRNA convert PreQ1 to queuine (Q), resulting in the hypermodified nucleoside queuosine (7-(((4,5-cis-dihydroxy-2-cyclopenten-1-yl)amino)methyl)-7-deazaguanosine). The chain is Putative queuine tRNA-ribosyltransferase from Archaeoglobus fulgidus (strain ATCC 49558 / DSM 4304 / JCM 9628 / NBRC 100126 / VC-16).